A 347-amino-acid polypeptide reads, in one-letter code: Beta carbonic anhydrase 1, chloroplastic (347 aa).

The transit peptide at 1–113 directs the protein to the chloroplast; the sequence is MSTAPLSGFF…AAAKVEQITA (113 aa). The residue at position 114 (A114) is an N-acetylalanine. S175 is modified (phosphoserine). Position 203 is a phosphotyrosine (Y203). S266 bears the Phosphoserine mark. Residue C280 is modified to S-nitrosocysteine.

The protein belongs to the beta-class carbonic anhydrase family. In terms of assembly, homohexamer. Post-translationally, S-nitrosylation at Cys-280 is up-regulated during nitrosative burst and suppresses both binding of salicylic acid and carbonic anhydrase activity. S-nitrosylated in response to an avirulent but not to a virulent bacterial strain. Strongly expressed in aerial tissues including leaves, stems, flowers and siliques. Accumulates in both guard cells and mesophyll cells.

The protein localises to the plastid. Its subcellular location is the chloroplast stroma. It is found in the cell membrane. The enzyme catalyses hydrogencarbonate + H(+) = CO2 + H2O. Reversible hydration of carbon dioxide. Required for photosynthesis in cotyledons. Binds salicylic acid. Together with BCA4, involved in the CO(2) signaling pathway which controls gas-exchange between plants and the atmosphere by modulating stomatal development and movements. Promotes water use efficiency. The chain is Beta carbonic anhydrase 1, chloroplastic from Arabidopsis thaliana (Mouse-ear cress).